Consider the following 176-residue polypeptide: Large ribosomal subunit protein uL10 (176 aa).

The protein belongs to the universal ribosomal protein uL10 family. Part of the ribosomal stalk of the 50S ribosomal subunit. The N-terminus interacts with L11 and the large rRNA to form the base of the stalk. The C-terminus forms an elongated spine to which L12 dimers bind in a sequential fashion forming a multimeric L10(L12)X complex.

In terms of biological role, forms part of the ribosomal stalk, playing a central role in the interaction of the ribosome with GTP-bound translation factors. The chain is Large ribosomal subunit protein uL10 from Teredinibacter turnerae (strain ATCC 39867 / T7901).